The following is a 393-amino-acid chain: Formate-dependent phosphoribosylglycinamide formyltransferase (393 aa).

N(1)-(5-phospho-beta-D-ribosyl)glycinamide contacts are provided by residues 22 to 23 and E82; that span reads EL. ATP contacts are provided by residues R114, K155, 160-165, 195-198, and E203; these read SSGKGQ and EGFI. In terms of domain architecture, ATP-grasp spans 119 to 308; the sequence is RLAAEELDLP…QFALHARAIL (190 aa). 2 residues coordinate Mg(2+): E267 and E279. Residues D286, K356, and 363–364 contribute to the N(1)-(5-phospho-beta-D-ribosyl)glycinamide site; that span reads RR.

It belongs to the PurK/PurT family. In terms of assembly, homodimer.

The enzyme catalyses N(1)-(5-phospho-beta-D-ribosyl)glycinamide + formate + ATP = N(2)-formyl-N(1)-(5-phospho-beta-D-ribosyl)glycinamide + ADP + phosphate + H(+). It participates in purine metabolism; IMP biosynthesis via de novo pathway; N(2)-formyl-N(1)-(5-phospho-D-ribosyl)glycinamide from N(1)-(5-phospho-D-ribosyl)glycinamide (formate route): step 1/1. Its function is as follows. Involved in the de novo purine biosynthesis. Catalyzes the transfer of formate to 5-phospho-ribosyl-glycinamide (GAR), producing 5-phospho-ribosyl-N-formylglycinamide (FGAR). Formate is provided by PurU via hydrolysis of 10-formyl-tetrahydrofolate. This Pseudomonas entomophila (strain L48) protein is Formate-dependent phosphoribosylglycinamide formyltransferase.